The primary structure comprises 419 residues: UDP-N-acetylglucosamine 1-carboxyvinyltransferase (419 aa).

22–23 contributes to the phosphoenolpyruvate binding site; it reads KN. R92 is a UDP-N-acetyl-alpha-D-glucosamine binding site. Catalysis depends on C116, which acts as the Proton donor. Position 116 is a 2-(S-cysteinyl)pyruvic acid O-phosphothioketal (C116). UDP-N-acetyl-alpha-D-glucosamine is bound by residues D306 and I328.

Belongs to the EPSP synthase family. MurA subfamily.

It localises to the cytoplasm. It catalyses the reaction phosphoenolpyruvate + UDP-N-acetyl-alpha-D-glucosamine = UDP-N-acetyl-3-O-(1-carboxyvinyl)-alpha-D-glucosamine + phosphate. The protein operates within cell wall biogenesis; peptidoglycan biosynthesis. Its function is as follows. Cell wall formation. Adds enolpyruvyl to UDP-N-acetylglucosamine. This is UDP-N-acetylglucosamine 1-carboxyvinyltransferase from Pseudoalteromonas translucida (strain TAC 125).